A 401-amino-acid polypeptide reads, in one-letter code: Argininosuccinate synthase (401 aa).

Residue 9–17 (AYSGGLDTS) coordinates ATP. Position 86 (tyrosine 86) interacts with L-citrulline. Glycine 116 is a binding site for ATP. 3 residues coordinate L-aspartate: threonine 118, asparagine 122, and aspartate 123. Asparagine 122 contributes to the L-citrulline binding site. L-citrulline is bound by residues arginine 126, serine 174, serine 183, glutamate 259, and tyrosine 271.

This sequence belongs to the argininosuccinate synthase family. Type 1 subfamily. Homotetramer.

Its subcellular location is the cytoplasm. It catalyses the reaction L-citrulline + L-aspartate + ATP = 2-(N(omega)-L-arginino)succinate + AMP + diphosphate + H(+). It functions in the pathway amino-acid biosynthesis; L-arginine biosynthesis; L-arginine from L-ornithine and carbamoyl phosphate: step 2/3. This chain is Argininosuccinate synthase, found in Bacillus cereus (strain Q1).